The primary structure comprises 552 residues: CTP synthase (552 aa).

Positions 1-270 (MTKFVFVTGG…DGLICDKLRL (270 aa)) are amidoligase domain. Residue serine 13 coordinates CTP. Serine 13 is a binding site for UTP. ATP contacts are provided by residues 14–19 (SLGKGI) and aspartate 71. Aspartate 71 and glutamate 144 together coordinate Mg(2+). CTP is bound by residues 151–153 (DIE), 191–196 (KTKPTQ), and lysine 227. Residues 191 to 196 (KTKPTQ) and lysine 227 contribute to the UTP site. A Glutamine amidotransferase type-1 domain is found at 295-548 (KIAMVGKYVE…VKAAIERQKA (254 aa)). Residue glycine 357 participates in L-glutamine binding. Cysteine 384 (nucleophile; for glutamine hydrolysis) is an active-site residue. L-glutamine is bound by residues 385–388 (LGMQ), glutamate 408, and arginine 474. Active-site residues include histidine 521 and glutamate 523.

This sequence belongs to the CTP synthase family. Homotetramer.

It catalyses the reaction UTP + L-glutamine + ATP + H2O = CTP + L-glutamate + ADP + phosphate + 2 H(+). It carries out the reaction L-glutamine + H2O = L-glutamate + NH4(+). The enzyme catalyses UTP + NH4(+) + ATP = CTP + ADP + phosphate + 2 H(+). It participates in pyrimidine metabolism; CTP biosynthesis via de novo pathway; CTP from UDP: step 2/2. Its activity is regulated as follows. Allosterically activated by GTP, when glutamine is the substrate; GTP has no effect on the reaction when ammonia is the substrate. The allosteric effector GTP functions by stabilizing the protein conformation that binds the tetrahedral intermediate(s) formed during glutamine hydrolysis. Inhibited by the product CTP, via allosteric rather than competitive inhibition. Functionally, catalyzes the ATP-dependent amination of UTP to CTP with either L-glutamine or ammonia as the source of nitrogen. Regulates intracellular CTP levels through interactions with the four ribonucleotide triphosphates. The sequence is that of CTP synthase from Delftia acidovorans (strain DSM 14801 / SPH-1).